Consider the following 387-residue polypeptide: Sulfoacetaldehyde reductase (387 aa).

The protein belongs to the iron-containing alcohol dehydrogenase family.

It catalyses the reaction 2-hydroxyethane-1-sulfonate + NAD(+) = sulfoacetaldehyde + NADH + H(+). The protein operates within organosulfur degradation; alkanesulfonate degradation. Involved in an anaerobic respiration pathway that converts the sulfonate taurine (2-aminoethanesulfonate) to ammonia, acetate and sulfide. Catalyzes the NADH-dependent reduction of sulfoacetaldehyde to 2-hydroxyethane-1-sulfonate (isethionate). Does not accept acetaldehyde as a substrate. This is Sulfoacetaldehyde reductase from Bilophila wadsworthia (strain 3_1_6).